Consider the following 81-residue polypeptide: Cortexin-2 (81 aa).

The chain crosses the membrane as a helical span at residues 29–49 (TGFAFVGILCIFLGLLIIRCF).

The protein belongs to the cortexin family.

It localises to the membrane. This is Cortexin-2 (Ctxn2) from Mus musculus (Mouse).